Consider the following 111-residue polypeptide: Colipase (111 aa).

The N-terminal stretch at 1-16 (MKVLVLLLVTLAVVYA) is a signal peptide. Positions 17 to 21 (APDPR) are cleaved as a propeptide — enterostatin, activation peptide. Cystine bridges form between Cys-33–Cys-44, Cys-39–Cys-55, Cys-43–Cys-77, Cys-65–Cys-85, and Cys-79–Cys-103.

This sequence belongs to the colipase family. Forms a 1:1 stoichiometric complex with pancreatic lipase. Expressed by the pancreas.

It localises to the secreted. Its function is as follows. Colipase is a cofactor of pancreatic lipase. It allows the lipase to anchor itself to the lipid-water interface. Without colipase the enzyme is washed off by bile salts, which have an inhibitory effect on the lipase. Enterostatin has a biological activity as a satiety signal. The sequence is that of Colipase (CLPS) from Ictidomys tridecemlineatus (Thirteen-lined ground squirrel).